The following is a 95-amino-acid chain: Aspartyl/glutamyl-tRNA(Asn/Gln) amidotransferase subunit C (95 aa).

This sequence belongs to the GatC family. In terms of assembly, heterotrimer of A, B and C subunits.

The enzyme catalyses L-glutamyl-tRNA(Gln) + L-glutamine + ATP + H2O = L-glutaminyl-tRNA(Gln) + L-glutamate + ADP + phosphate + H(+). It carries out the reaction L-aspartyl-tRNA(Asn) + L-glutamine + ATP + H2O = L-asparaginyl-tRNA(Asn) + L-glutamate + ADP + phosphate + 2 H(+). Its function is as follows. Allows the formation of correctly charged Asn-tRNA(Asn) or Gln-tRNA(Gln) through the transamidation of misacylated Asp-tRNA(Asn) or Glu-tRNA(Gln) in organisms which lack either or both of asparaginyl-tRNA or glutaminyl-tRNA synthetases. The reaction takes place in the presence of glutamine and ATP through an activated phospho-Asp-tRNA(Asn) or phospho-Glu-tRNA(Gln). This Chlorobaculum tepidum (strain ATCC 49652 / DSM 12025 / NBRC 103806 / TLS) (Chlorobium tepidum) protein is Aspartyl/glutamyl-tRNA(Asn/Gln) amidotransferase subunit C.